A 359-amino-acid polypeptide reads, in one-letter code: POU domain, class 5, transcription factor 1B (359 aa).

Disordered regions lie at residues 1–53 and 87–116; these read MAGH…GVGP and QGGL…EPCT. S111 is modified (phosphoserine). The POU-specific domain maps to 138-212; that stretch reads DIKALQKELE…LLQKWVEEAD (75 aa). Positions 229–288 form a DNA-binding region, homeobox; the sequence is ARKRKRTSIENRVRGNLENLFLQCPKPTLQISHIAQQLGLEKDVVRVWFCNRRQKGKRSS. T235 is subject to Phosphothreonine. S236, S288, and S289 each carry phosphoserine. Positions 287–322 are disordered; that stretch reads SSSDYAQREDFEAAGSPFSGGPVSFPPAPGPHFGTP. The span at 299–309 shows a compositional bias: low complexity; that stretch reads AAGSPFSGGPV. The residue at position 354 (S354) is a Phosphoserine.

Belongs to the POU transcription factor family. Class-5 subfamily. In terms of tissue distribution, detected in epithelial cells of the prostate (at protein level). Detected at the mRNA level in several cancer tissues (breast, uterine cervix, lung, thyroid gland, esophagus, colon, urinary bladder, and glioma).

It localises to the nucleus. The protein resides in the cytoplasm. Shows weak transcriptional activator activity. This Homo sapiens (Human) protein is POU domain, class 5, transcription factor 1B (POU5F1B).